The chain runs to 289 residues: MEVKPFLKWAGGKTQILSQIEENLPKELKEGNIKKYIEPFVGGGAVLFYLLQKYEFKKVIISDINEDLMLCYKVVKNDVDRLIEELSSLRDEFLSLDEEKRKEFYYKVRDDFNKNKNDCDEVKRVAQFIFLNKTCYNGLYRVNKKGEFNVPYGRYKNPKIFDEQNLKNVSKLLKNVKILCGDFEIVDEYVDAESFVYFDPPYKPLNKTSSFTSYTKYDFNDDDQIRLAKFYRKLDKRGAKLMLSNSYNVDFFGKLYEGFNIKKVVAKRMINCKGDKRKDGIYELLIMNY.

Trp9, Lys13, Asp63, and Asp199 together coordinate S-adenosyl-L-methionine.

The protein belongs to the N(4)/N(6)-methyltransferase family.

It carries out the reaction a 2'-deoxyadenosine in DNA + S-adenosyl-L-methionine = an N(6)-methyl-2'-deoxyadenosine in DNA + S-adenosyl-L-homocysteine + H(+). Its function is as follows. An alpha subtype methylase that recognizes the double-stranded sequence 5'-GATC-3', methylates A-2 on both strands, and protects the DNA from cleavage by the MjaIII endonuclease. In Methanocaldococcus jannaschii (strain ATCC 43067 / DSM 2661 / JAL-1 / JCM 10045 / NBRC 100440) (Methanococcus jannaschii), this protein is Type II methyltransferase M.MjaIII (mjaIIIM).